The chain runs to 630 residues: MACLLRVALNPTFERSTVASQRQNPKTILSFHCKVSSFKTKTMSQSFAPREKLMRKCREKKEAEREAEREAEREAEEEEKAEEAEAEADKEEAEEESEEEEEEEEEEAEAEEEALGGDIEDLFSENETQKIRMGLLDWYDVNKRDLPWRNRRSESEKERRAYEVWVSEIMLQQTRVQTVMKYYKRWMQKWPTIYDLGQASLENLIVSRSRELSFLRGNEKKEVNEMWAGLGYYRRARFLLEGAKMVVAGTEGFPNQASSLMKVKGIGQYTAGAIASIAFNEAVPVVDGNVIRVLARLKAISANPKDRLTARNFWKLAAQLVDPSRPGDFNQSLMELGATLCTVSKPSCSSCPVSSQCRAFSLSEENRTISVTDYPTKVIKAKPRHDFCCVCVLEIHNLERNQSGGRFVLVKRPEQGLLAGLWEFPSVILNEEADSATRRNAINVYLKEAFRFHVELKKACTIVSREELGEFVHIFTHIRRKVYVELLVVQLTGGTEDLFKGQAKDTLTWKCVSSDVLSTLGLTSAVRKVPPFRLQHIKRLSLDVMVEKEQILECRCIQWLKHTSKAYLFLMSHQIEQPYRGNENSHDLLLTLFFMLLSFYSSCLALGIKFGDLGLKLNSLVSTEKSDGDV.

Residues 54–72 (MRKCREKKEAEREAEREAE) show a composition bias toward basic and acidic residues. The tract at residues 54-123 (MRKCREKKEA…ALGGDIEDLF (70 aa)) is disordered. The segment covering 73 to 123 (REAEEEEKAEEAEAEADKEEAEEESEEEEEEEEEEAEAEEEALGGDIEDLF) has biased composition (acidic residues). Catalysis depends on E168, which acts as the Proton donor/acceptor. [4Fe-4S] cluster-binding residues include C341, C348, C351, and C357. The region spanning 383–536 (PRHDFCCVCV…RKVPPFRLQH (154 aa)) is the Nudix hydrolase domain. The short motif at 427 to 451 (VILNEEADSATRRNAINVYLKEAFR) is the Nudix box element.

The protein belongs to the Nth/MutY family. [4Fe-4S] cluster serves as cofactor.

It localises to the nucleus. The enzyme catalyses Hydrolyzes free adenine bases from 7,8-dihydro-8-oxoguanine:adenine mismatched double-stranded DNA, leaving an apurinic site.. In terms of biological role, involved in oxidative DNA damage repair. Initiates repair of A*oxoG to C*G by removing the inappropriately paired adenine base from the DNA backbone. Possesses both adenine and 2-OH-A DNA glycosylase activities. The sequence is that of Adenine DNA glycosylase (MYH) from Arabidopsis thaliana (Mouse-ear cress).